A 180-amino-acid polypeptide reads, in one-letter code: Interleukin-1-binding protein (180 aa).

An N-terminal signal peptide occupies residues 1–20 (MSILPVIFLPIFFYSPFVQT). N-linked (GlcNAc...) asparagine; by host glycans are attached at residues asparagine 80, asparagine 103, and asparagine 113.

The protein belongs to the interleukin-1 receptor family. Interacts with mouse Il1b.

Its subcellular location is the secreted. Functionally, may reduce the host inflammatory response by interacting with inteleukin-1 beta (Il1b) and thus decreasing the association between IL1B and its cellular receptor. This is Interleukin-1-binding protein (OPG201) from Monkeypox virus.